Here is a 178-residue protein sequence, read N- to C-terminus: Interleukin-10 (178 aa).

Residues 1 to 18 (MHSSALLCCLVVLTGVRA) form the signal peptide. 2 cysteine pairs are disulfide-bonded: Cys-30–Cys-126 and Cys-80–Cys-132. The N-linked (GlcNAc...) asparagine glycan is linked to Asn-134.

This sequence belongs to the IL-10 family. Homodimer. Interacts with IL10RA and IL10RB.

It is found in the secreted. Major immune regulatory cytokine that acts on many cells of the immune system where it has profound anti-inflammatory functions, limiting excessive tissue disruption caused by inflammation. Mechanistically, IL10 binds to its heterotetrameric receptor comprising IL10RA and IL10RB leading to JAK1 and STAT2-mediated phosphorylation of STAT3. In turn, STAT3 translocates to the nucleus where it drives expression of anti-inflammatory mediators. Targets antigen-presenting cells (APCs) such as macrophages and monocytes and inhibits their release of pro-inflammatory cytokines including granulocyte-macrophage colony-stimulating factor /GM-CSF, granulocyte colony-stimulating factor/G-CSF, IL-1 alpha, IL-1 beta, IL-6, IL-8 and TNF-alpha. Also interferes with antigen presentation by reducing the expression of MHC-class II and co-stimulatory molecules, thereby inhibiting their ability to induce T cell activation. In addition, controls the inflammatory response of macrophages by reprogramming essential metabolic pathways including mTOR signaling. The polypeptide is Interleukin-10 (IL10) (Papio hamadryas (Hamadryas baboon)).